Reading from the N-terminus, the 284-residue chain is MVLMIVSGRSGSGKSVALRALEDMGFYCVDNLPVVLLPQLANTLAERNSSAAVSIDVRNMPESPEVFEYAMTQLPDSFSPQLLFLDADRNTLIRRYSDTRRLHPLSSKNLSLESAIDEESDLLEPLRSRADLIIDTSEMSVHELAEMLRTRLLGKRERELTMVFESFGFKHGIPIDADYVFDVRFLPNPHWDPKLRPMTGLDKPVASFLDRHTEVHNFIYQTRSYLEQWLPMLETNNRSYLTVAIGCTGGKHRSVYVAEQLADYFRSRGKNVQSRHRTLEKRKQ.

8-15 (GRSGSGKS) serves as a coordination point for ATP. Residue 56 to 59 (DVRN) participates in GTP binding. Residues 266–284 (RSRGKNVQSRHRTLEKRKQ) are RNA-binding.

It belongs to the RapZ-like family. RapZ subfamily. Homotrimer.

Modulates the synthesis of GlmS, by affecting the processing and stability of the regulatory small RNA GlmZ. When glucosamine-6-phosphate (GlcN6P) concentrations are high in the cell, RapZ binds GlmZ and targets it to cleavage by RNase E. Consequently, GlmZ is inactivated and unable to activate GlmS synthesis. Under low GlcN6P concentrations, RapZ is sequestered and inactivated by an other regulatory small RNA, GlmY, preventing GlmZ degradation and leading to synthesis of GlmS. This chain is RNase adapter protein RapZ, found in Serratia proteamaculans (strain 568).